Reading from the N-terminus, the 169-residue chain is S-ribosylhomocysteine lyase (169 aa).

Fe cation contacts are provided by His-54, His-58, and Cys-128.

It belongs to the LuxS family. In terms of assembly, homodimer. The cofactor is Fe cation.

The enzyme catalyses S-(5-deoxy-D-ribos-5-yl)-L-homocysteine = (S)-4,5-dihydroxypentane-2,3-dione + L-homocysteine. Involved in the synthesis of autoinducer 2 (AI-2) which is secreted by bacteria and is used to communicate both the cell density and the metabolic potential of the environment. The regulation of gene expression in response to changes in cell density is called quorum sensing. Catalyzes the transformation of S-ribosylhomocysteine (RHC) to homocysteine (HC) and 4,5-dihydroxy-2,3-pentadione (DPD). The protein is S-ribosylhomocysteine lyase of Shewanella frigidimarina (strain NCIMB 400).